Consider the following 89-residue polypeptide: Putative ankyrin repeat protein RF_1157 (89 aa).

An ANK repeat occupies 2–32 (YNTTPLNFAINQENNEEVIKYLLANGANPRL).

The chain is Putative ankyrin repeat protein RF_1157 from Rickettsia felis (strain ATCC VR-1525 / URRWXCal2) (Rickettsia azadi).